The following is a 268-amino-acid chain: UDP-2,3-diacylglucosamine hydrolase (268 aa).

Mn(2+)-binding residues include D25, H27, D58, N97, and H132. Position 97-98 (97-98) interacts with substrate; the sequence is NR. The substrate site is built by D140, S178, E191, and H222. H222 and H224 together coordinate Mn(2+).

Belongs to the LpxH family. Mn(2+) is required as a cofactor.

Its subcellular location is the cell inner membrane. It catalyses the reaction UDP-2-N,3-O-bis[(3R)-3-hydroxytetradecanoyl]-alpha-D-glucosamine + H2O = 2-N,3-O-bis[(3R)-3-hydroxytetradecanoyl]-alpha-D-glucosaminyl 1-phosphate + UMP + 2 H(+). It participates in glycolipid biosynthesis; lipid IV(A) biosynthesis; lipid IV(A) from (3R)-3-hydroxytetradecanoyl-[acyl-carrier-protein] and UDP-N-acetyl-alpha-D-glucosamine: step 4/6. In terms of biological role, hydrolyzes the pyrophosphate bond of UDP-2,3-diacylglucosamine to yield 2,3-diacylglucosamine 1-phosphate (lipid X) and UMP by catalyzing the attack of water at the alpha-P atom. Involved in the biosynthesis of lipid A, a phosphorylated glycolipid that anchors the lipopolysaccharide to the outer membrane of the cell. The sequence is that of UDP-2,3-diacylglucosamine hydrolase from Ralstonia nicotianae (strain ATCC BAA-1114 / GMI1000) (Ralstonia solanacearum).